The primary structure comprises 216 residues: ATP phosphoribosyltransferase (216 aa).

The protein belongs to the ATP phosphoribosyltransferase family. Short subfamily. In terms of assembly, heteromultimer composed of HisG and HisZ subunits.

Its subcellular location is the cytoplasm. The catalysed reaction is 1-(5-phospho-beta-D-ribosyl)-ATP + diphosphate = 5-phospho-alpha-D-ribose 1-diphosphate + ATP. The protein operates within amino-acid biosynthesis; L-histidine biosynthesis; L-histidine from 5-phospho-alpha-D-ribose 1-diphosphate: step 1/9. Functionally, catalyzes the condensation of ATP and 5-phosphoribose 1-diphosphate to form N'-(5'-phosphoribosyl)-ATP (PR-ATP). Has a crucial role in the pathway because the rate of histidine biosynthesis seems to be controlled primarily by regulation of HisG enzymatic activity. This Microcystis aeruginosa (strain NIES-843 / IAM M-2473) protein is ATP phosphoribosyltransferase.